Reading from the N-terminus, the 122-residue chain is UPF0102 protein RL0336 (122 aa).

The protein belongs to the UPF0102 family.

This Rhizobium johnstonii (strain DSM 114642 / LMG 32736 / 3841) (Rhizobium leguminosarum bv. viciae) protein is UPF0102 protein RL0336.